The following is a 258-amino-acid chain: Protein IMPACT homolog (258 aa).

In terms of domain architecture, RWD spans 10 to 114 (EELEAVEAIY…TELDGVLYVE (105 aa)). A Glycyl lysine isopeptide (Lys-Gly) (interchain with G-Cter in ubiquitin) cross-link involves residue K187.

The protein belongs to the IMPACT family. In terms of assembly, interacts (via N-terminus) with GCN1 (via C-terminus); this interaction reduces the GCN1-GCN20 complex formation and prevents the interaction of GCN1 with GCN2 protein kinase and GCN2 activation in amino acid-starved cells. Interacts (via C-terminus) with ACT1; this interaction occurs in a GCN1-independent manner. Interacts with RPL39; this interaction occurs in a GCN1-independent manner. Associates (via middle region) with ribosomes; this association occurs in a GCN1-independent manner and persists under amino acid starvation conditions.

The protein localises to the cytoplasm. Its subcellular location is the nucleus. In terms of biological role, translational regulator that ensures constant high levels of translation under amino acid starvation. Plays a role as a negative regulator of the GCN2 kinase activity; impairs GCN1-mediated GCN2 activation, and hence GCN2-mediated eIF-2-alpha phosphorylation in amino acid-starved cells and subsequent down-regulation of protein synthesis. In normal conditions, it resides in a actin complex and has no activity. This Saccharomyces cerevisiae (strain ATCC 204508 / S288c) (Baker's yeast) protein is Protein IMPACT homolog (YIH1).